The primary structure comprises 258 residues: Type III pantothenate kinase (258 aa).

6–13 provides a ligand contact to ATP; that stretch reads DVGNTNTV. Substrate contacts are provided by residues Tyr-100 and 107–110; that span reads GADR. Catalysis depends on Asp-109, which acts as the Proton acceptor. Asp-129 is a binding site for K(+). Thr-132 lines the ATP pocket. Thr-184 provides a ligand contact to substrate.

The protein belongs to the type III pantothenate kinase family. In terms of assembly, homodimer. It depends on NH4(+) as a cofactor. Requires K(+) as cofactor.

The protein resides in the cytoplasm. It carries out the reaction (R)-pantothenate + ATP = (R)-4'-phosphopantothenate + ADP + H(+). It functions in the pathway cofactor biosynthesis; coenzyme A biosynthesis; CoA from (R)-pantothenate: step 1/5. Its function is as follows. Catalyzes the phosphorylation of pantothenate (Pan), the first step in CoA biosynthesis. The polypeptide is Type III pantothenate kinase (Geobacillus thermodenitrificans (strain NG80-2)).